Reading from the N-terminus, the 213-residue chain is Iron sulfur cluster assembly protein 1, mitochondrial (213 aa).

It belongs to the NifU family. As to quaternary structure, component of the core Fe-S cluster (ISC) assembly machinery. The cofactor is [2Fe-2S] cluster.

It localises to the mitochondrion matrix. The protein operates within cofactor biosynthesis; iron-sulfur cluster biosynthesis. Its function is as follows. Scaffold protein for the de novo synthesis of iron-sulfur (Fe-S) clusters within mitochondria, which is required for maturation of both mitochondrial and cytoplasmic [2Fe-2S] and [4Fe-4S] proteins. First, a [2Fe-2S] cluster is transiently assembled on the scaffold protein ISU1. In a second step, the cluster is released from ISU1, transferred to a glutaredoxin, followed by the formation of mitochondrial [2Fe-2S] proteins, the synthesis of [4Fe-4S] clusters and their target-specific insertion into the recipient apoproteins. Cluster assembly on ISU1 depends on the function of the cysteine desulfurase complex NFS1-ISD11, which serves as the sulfur donor for cluster synthesis, the iron-binding protein frataxin as the putative iron donor, and the electron transfer chain comprised of ferredoxin reductase and ferredoxin, which receive their electrons from NADH. This Candida glabrata (strain ATCC 2001 / BCRC 20586 / JCM 3761 / NBRC 0622 / NRRL Y-65 / CBS 138) (Yeast) protein is Iron sulfur cluster assembly protein 1, mitochondrial (ISU1).